A 163-amino-acid chain; its full sequence is Flagellar assembly factor FliW (163 aa).

Positions 136 to 156 (PFFETSEKKQSGLQRLERQPE) are enriched in basic and acidic residues. The segment at 136-163 (PFFETSEKKQSGLQRLERQPEKSVPPAG) is disordered.

Belongs to the FliW family. In terms of assembly, interacts with translational regulator CsrA and flagellin(s).

It is found in the cytoplasm. In terms of biological role, acts as an anti-CsrA protein, binds CsrA and prevents it from repressing translation of its target genes, one of which is flagellin. Binds to flagellin and participates in the assembly of the flagellum. The polypeptide is Flagellar assembly factor FliW (Geotalea uraniireducens (strain Rf4) (Geobacter uraniireducens)).